Consider the following 360-residue polypeptide: Peptide chain release factor 1 (360 aa).

An N5-methylglutamine modification is found at Q235. The interval 284–303 (RERQSKEAAERKSLVGSGDR) is disordered.

It belongs to the prokaryotic/mitochondrial release factor family. Methylated by PrmC. Methylation increases the termination efficiency of RF1.

The protein localises to the cytoplasm. Functionally, peptide chain release factor 1 directs the termination of translation in response to the peptide chain termination codons UAG and UAA. This is Peptide chain release factor 1 from Bordetella avium (strain 197N).